Consider the following 1450-residue polypeptide: Sister chromatid cohesion protein PDS5 homolog (1450 aa).

Disordered regions lie at residues 1–145 (MATR…KETK), 680–707 (VGGS…QQQQ), and 1340–1450 (LPPL…EVEN). Acidic residues predominate over residues 45–59 (DDGELDSDIDEEDES). Residues 77–138 (KTQQQPQKSI…TSSSSQQSTQ (62 aa)) are compositionally biased toward low complexity. Positions 650–716 (KQLFKKYLEE…QLQQPENDIE (67 aa)) form a coiled coil. Residues 682–691 (GSTTPTSKKS) show a composition bias toward polar residues. Low complexity-rich tracts occupy residues 692–707 (QPPQ…QQQQ) and 1350–1363 (NNNN…STNN). Over residues 1369–1378 (DENNNNKNDN) the composition is skewed to basic and acidic residues. Positions 1387–1401 (NSTTAVPQKSIISKP) are enriched in low complexity. The span at 1402 to 1427 (PAKKVSKKAAAKQKSPKKKTNKKKKQ) shows a compositional bias: basic residues. A compositionally biased stretch (acidic residues) spans 1430–1450 (SEEEVSSSEEEDESQDEEVEN).

The protein belongs to the PDS5 family.

It is found in the nucleus. Its function is as follows. May regulate sister chromatid cohesion during mitosis and couple it to DNA replication. This chain is Sister chromatid cohesion protein PDS5 homolog, found in Dictyostelium discoideum (Social amoeba).